A 460-amino-acid chain; its full sequence is tRNA modification GTPase MnmE (460 aa).

Residues arginine 29, glutamate 91, and lysine 132 each contribute to the (6S)-5-formyl-5,6,7,8-tetrahydrofolate site. Residues 227 to 383 form the TrmE-type G domain; it reads GISIALIGKT…LIDTIIKKCG (157 aa). Asparagine 237 is a binding site for K(+). Residues 237–242, 256–262, and 281–284 each bind GTP; these read NVGKSS, TNIPGTT, and DTAG. Residue serine 241 coordinates Mg(2+). K(+)-binding residues include threonine 256, isoleucine 258, and threonine 261. Residue threonine 262 coordinates Mg(2+). Lysine 460 provides a ligand contact to (6S)-5-formyl-5,6,7,8-tetrahydrofolate.

Belongs to the TRAFAC class TrmE-Era-EngA-EngB-Septin-like GTPase superfamily. TrmE GTPase family. In terms of assembly, homodimer. Heterotetramer of two MnmE and two MnmG subunits. The cofactor is K(+).

The protein resides in the cytoplasm. Its function is as follows. Exhibits a very high intrinsic GTPase hydrolysis rate. Involved in the addition of a carboxymethylaminomethyl (cmnm) group at the wobble position (U34) of certain tRNAs, forming tRNA-cmnm(5)s(2)U34. In Prochlorococcus marinus (strain MIT 9301), this protein is tRNA modification GTPase MnmE.